Reading from the N-terminus, the 110-residue chain is QVRPFPDVYQRSACQARETLVSILQEYPDEISDIFRPSCVAVLRCSGCCTDESLKCTPVGKHTVDMQIMRVNPRTQSSKMEVMKFTEHTACECRPRRKQGEPDGPKEKPR.

Glutamine 1 carries the pyrrolidone carboxylic acid modification. Intrachain disulfides connect cysteine 14–cysteine 56, cysteine 45–cysteine 91, and cysteine 49–cysteine 93.

Homodimer; disulfide-linked. Interacts with high affinity with KDR/VEGFR-2, and with a lower affinity with neuropilin-1 (NRP1) and neuropilin-2 (NRP2). Expressed by the venom gland.

It is found in the secreted. Functionally, snake venom VEGFs may contribute to venom dispersion and prey subjugation by inducing vascular permeability and hypotension. This protein increases vascular permeability and angiogenesis probably through VEGF receptor (KDR/VEGFR-2) signaling. Induces DNA synthesis in human umbilical vein endothelial cells, and promotes mouse embryonic stem cell proliferation and differentiation. It may also induce a drastic hypotensive effect after intravenous injection. The hypotension is mediated by nitric oxide (NO), which is produced by VEGF-activated endothelium NO synthase. In Macrovipera lebetinus (Levantine viper), this protein is Snake venom vascular endothelial growth factor toxin ICPP.